The chain runs to 308 residues: Phenylcoumaran benzylic ether reductase 1 (308 aa).

NADP(+)-binding positions include 11-17 (GGTGYIG), Arg-36, and Arg-45. Lys-133 serves as the catalytic Proton acceptor. Residue Arg-137 coordinates NADP(+).

The protein belongs to the NmrA-type oxidoreductase family. Isoflavone reductase subfamily. Expressed in apical meristem and cotyledon veins of young seedlings. Expressed in vascular tissues of roots, leaves, stems and petals. Expressed in pollen grains. Expressed at low levels in cauline leaves and siliques.

It carries out the reaction (-)-dehydrodiconiferyl alcohol + NADPH + H(+) = (S)-isodihydrodehydrodiconiferyl alcohol + NADP(+). It catalyses the reaction (+)-dehydrodiconiferyl alcohol + NADPH + H(+) = (R)-isodihydrodehydrodiconiferyl alcohol + NADP(+). The catalysed reaction is (2R,3S)-dihydrodehydrodiconiferyl alcohol + NADPH + H(+) = (S)-tetrahydrodehydrodiconiferyl alcohol + NADP(+). The enzyme catalyses (2S,3R)-dihydrodehydrodiconiferyl alcohol + NADPH + H(+) = (R)-tetrahydrodehydrodiconiferyl alcohol + NADP(+). In terms of biological role, oxidoreductase involved in lignan biosynthesis. Catalyzes the NADPH-dependent reduction of phenylcoumaran benzylic ethers. Converts dehydrodiconiferyl alcohol (DDC) to isodihydrodehydrodiconiferyl alcohol (IDDDC), and dihydrodehydrodiconiferyl alcohol (DDDC) to tetrahydrodehydrodiconiferyl alcohol (TDDC). Plays an important role in the biosynthesis of secondary metabolites. In addition to the 8-5'-linked neolignan DDC, can reduce the 8-8'-linked lignans, pinoresinol, and lariciresinol, but with lower activities. The sequence is that of Phenylcoumaran benzylic ether reductase 1 from Arabidopsis thaliana (Mouse-ear cress).